Here is a 278-residue protein sequence, read N- to C-terminus: Purine nucleoside phosphorylase YlmD (278 aa).

The Zn(2+) site is built by histidine 87, cysteine 132, and histidine 149.

Belongs to the purine nucleoside phosphorylase YfiH/LACC1 family. In terms of assembly, homodimer. Requires Cu(2+) as cofactor. Zn(2+) is required as a cofactor.

It carries out the reaction adenosine + phosphate = alpha-D-ribose 1-phosphate + adenine. The enzyme catalyses S-methyl-5'-thioadenosine + phosphate = 5-(methylsulfanyl)-alpha-D-ribose 1-phosphate + adenine. The catalysed reaction is inosine + phosphate = alpha-D-ribose 1-phosphate + hypoxanthine. It catalyses the reaction adenosine + H2O + H(+) = inosine + NH4(+). Its function is as follows. Purine nucleoside enzyme that catalyzes the phosphorolysis of adenosine and inosine nucleosides, yielding D-ribose 1-phosphate and the respective free bases, adenine and hypoxanthine. Also catalyzes the phosphorolysis of S-methyl-5'-thioadenosine into adenine and S-methyl-5-thio-alpha-D-ribose 1-phosphate. Also has adenosine deaminase activity. The protein is Purine nucleoside phosphorylase YlmD (ylmD) of Bacillus subtilis (strain 168).